Here is a 164-residue protein sequence, read N- to C-terminus: MGRFLFASLGLLVVAFSLSGTGANLYCPFDWLSYNVSCYKLFYSLVTWDQAQRFCVEQQENSQLASIHDVGESVKLSNYISQRWGFFDVWMGLRLSKRNGIWEWSDGSNLTYTSWKEGEPNNLFNMEFCAVLSAGTRYLQWNDKKCTLLHPFLCQFQPRSEANG.

The first 23 residues, 1–23, serve as a signal peptide directing secretion; sequence MGRFLFASLGLLVVAFSLSGTGA. 3 cysteine pairs are disulfide-bonded: Cys-27–Cys-38, Cys-55–Cys-154, and Cys-129–Cys-146. Residues 34–155 form the C-type lectin domain; sequence YNVSCYKLFY…CTLLHPFLCQ (122 aa). N-linked (GlcNAc...) asparagine glycosylation is found at Asn-35 and Asn-109. The short motif at 119–121 is the Mannose-binding element; the sequence is EPN. Ca(2+) is bound by residues Glu-127, Asn-142, and Asp-143.

It belongs to the true venom lectin family. As to expression, expressed by the venom gland.

The protein resides in the secreted. Mannose-binding lectin which recognizes specific carbohydrate structures and agglutinates a variety of animal cells by binding to cell-surface glycoproteins and glycolipids. May be a calcium-dependent lectin. This Hydrophis hardwickii (Hardwick's spine-bellied seasnake) protein is C-type lectin 1.